The sequence spans 319 residues: ATP-dependent 6-phosphofructokinase (319 aa).

Gly11 contacts ATP. Position 21–25 (21–25) interacts with ADP; it reads RAVVR. ATP contacts are provided by residues 72-73 and 102-105; these read RC and GDGS. Asp103 is a Mg(2+) binding site. 125-127 serves as a coordination point for substrate; it reads TID. Asp127 acts as the Proton acceptor in catalysis. Position 154 (Arg154) interacts with ADP. Residues Arg162 and 169–171 each bind substrate; that span reads MGR. ADP contacts are provided by residues 185 to 187, Arg211, and 213 to 215; these read GAE and KKH. Substrate is bound by residues Glu222, Arg243, and 249 to 252; that span reads HVQR.

This sequence belongs to the phosphofructokinase type A (PFKA) family. ATP-dependent PFK group I subfamily. Prokaryotic clade 'B1' sub-subfamily. Homotetramer. Mg(2+) serves as cofactor.

It localises to the cytoplasm. The catalysed reaction is beta-D-fructose 6-phosphate + ATP = beta-D-fructose 1,6-bisphosphate + ADP + H(+). Its pathway is carbohydrate degradation; glycolysis; D-glyceraldehyde 3-phosphate and glycerone phosphate from D-glucose: step 3/4. With respect to regulation, allosterically activated by ADP and other diphosphonucleosides, and allosterically inhibited by phosphoenolpyruvate. Catalyzes the phosphorylation of D-fructose 6-phosphate to fructose 1,6-bisphosphate by ATP, the first committing step of glycolysis. The sequence is that of ATP-dependent 6-phosphofructokinase from Bacillus anthracis (strain A0248).